Here is a 200-residue protein sequence, read N- to C-terminus: MSRYRGPRLRIIRRLGELPGFTSKTTTRTSSPGQHGGSNFAKSSAYGIRLQEKQKLRFNYGITERQLLSYVKKAKRMKGSTGEVLLQLLEMRLDNVVFRLGMAPTVVAARQLISHGHIVVNDQKVTIPSYACQVKDVISVRAKNNSRKMVTEANSTATANVPSHLSWNKESLVGVVNKVIDRKDVGLQLNELLVVEYYSR.

The S4 RNA-binding domain maps to 91–154; sequence MRLDNVVFRL…NSRKMVTEAN (64 aa).

The protein belongs to the universal ribosomal protein uS4 family. Part of the 30S ribosomal subunit. Contacts protein S5. The interaction surface between S4 and S5 is involved in control of translational fidelity.

Its subcellular location is the plastid. The protein localises to the chloroplast. Functionally, one of the primary rRNA binding proteins, it binds directly to 16S rRNA where it nucleates assembly of the body of the 30S subunit. In terms of biological role, with S5 and S12 plays an important role in translational accuracy. The sequence is that of Small ribosomal subunit protein uS4c (rps4) from Oltmannsiellopsis viridis (Marine flagellate).